The sequence spans 270 residues: Phosphatidate cytidylyltransferase (270 aa).

The next 7 helical transmembrane spans lie at 19–39 (LWLT…IGLA), 53–73 (TAFS…LLIL), 76–96 (GALL…VTQW), 101–121 (GWPA…SLLR), 126–146 (FGFT…IAAY), 183–203 (LVAS…ALLL), and 248–268 (ALLY…AIFF).

Belongs to the CDS family.

The protein localises to the cell inner membrane. It carries out the reaction a 1,2-diacyl-sn-glycero-3-phosphate + CTP + H(+) = a CDP-1,2-diacyl-sn-glycerol + diphosphate. It functions in the pathway phospholipid metabolism; CDP-diacylglycerol biosynthesis; CDP-diacylglycerol from sn-glycerol 3-phosphate: step 3/3. The polypeptide is Phosphatidate cytidylyltransferase (cdsA) (Brucella melitensis biotype 1 (strain ATCC 23456 / CCUG 17765 / NCTC 10094 / 16M)).